A 176-amino-acid polypeptide reads, in one-letter code: MAAPVLLRVSVPRWERVARYAVCAAGILLSIYAYHVEREKERDPEHRALCDLGPWVKCSAALASRWGRGFGLLGSIFGKDGVLNQPNSVFGLIFYILQLLLGMTASAVAALVLMTSSIVSVVGSLYLAYILYFVLKEFCIICVTTYVLNFLLLIINYKRLVYLNEAWKRQLQPKED.

The Cytoplasmic portion of the chain corresponds to 1 to 13 (MAAPVLLRVSVPR). A helical transmembrane segment spans residues 14–36 (WERVARYAVCAAGILLSIYAYHV). Residues 37–87 (EREKERDPEHRALCDLGPWVKCSAALASRWGRGFGLLGSIFGKDGVLNQPN) are Lumenal-facing. Cys50 and Cys58 are disulfide-bonded. Asn87 provides a ligand contact to (S)-warfarin. The chain crosses the membrane as a helical span at residues 88–102 (SVFGLIFYILQLLLG). At 103–107 (MTASA) the chain is on the cytoplasmic side. The chain crosses the membrane as a helical span at residues 108–135 (VAALVLMTSSIVSVVGSLYLAYILYFVL). At 136-138 (KEF) the chain is on the lumenal side. The cysteines at positions 139 and 142 are disulfide-linked. Residues 139–160 (CIICVTTYVLNFLLLIINYKRL) form a helical membrane-spanning segment. Cys142 and Tyr146 together coordinate phylloquinone. Tyr146 serves as a coordination point for (S)-warfarin. Residues 161–176 (VYLNEAWKRQLQPKED) are Cytoplasmic-facing.

This sequence belongs to the VKOR family. Detected in testis and lung.

Its subcellular location is the endoplasmic reticulum membrane. The enzyme catalyses phylloquinone + [protein]-disulfide + H2O = 2,3-epoxyphylloquinone + [protein]-dithiol. It catalyses the reaction phylloquinol + [protein]-disulfide = phylloquinone + [protein]-dithiol. Its activity is regulated as follows. Inhibited by warfarin (coumadin). Warfarin locks VKORC1 in both redox states into the closed conformation. In terms of biological role, involved in vitamin K metabolism. Can reduce inactive vitamin K 2,3-epoxide to active vitamin K, and may contribute to vitamin K-mediated protection against oxidative stress. Plays a role in vitamin K-dependent gamma-carboxylation of Glu residues in target proteins. The chain is Vitamin K epoxide reductase complex subunit 1-like protein 1 (Vkorc1l1) from Mus musculus (Mouse).